Reading from the N-terminus, the 513-residue chain is Histidine ammonia-lyase (513 aa).

The 5-imidazolinone (Ala-Gly) cross-link spans 144-146; that stretch reads ASG. 2,3-didehydroalanine (Ser) is present on serine 145.

This sequence belongs to the PAL/histidase family. In terms of processing, contains an active site 4-methylidene-imidazol-5-one (MIO), which is formed autocatalytically by cyclization and dehydration of residues Ala-Ser-Gly.

The protein resides in the cytoplasm. The catalysed reaction is L-histidine = trans-urocanate + NH4(+). The protein operates within amino-acid degradation; L-histidine degradation into L-glutamate; N-formimidoyl-L-glutamate from L-histidine: step 1/3. In Streptococcus pyogenes serotype M3 (strain ATCC BAA-595 / MGAS315), this protein is Histidine ammonia-lyase.